A 436-amino-acid chain; its full sequence is Tubulin epsilon and delta complex protein 2 (436 aa).

Disordered regions lie at residues 53–76 and 94–191; these read ARTP…PSSQ and VRKG…PSSA. Low complexity predominate over residues 111–131; it reads TSKAATSGAAAASHPRAPSRG. Residues 153-170 are compositionally biased toward basic and acidic residues; the sequence is DYPEHRLRSKGDKTHVRT. At serine 161 the chain carries Phosphoserine.

Interacts with TEDC1. Found in a complex with TEDC1, TEDC2, TUBE1 and TUBD1.

The protein localises to the cell projection. The protein resides in the cilium. Its subcellular location is the cytoplasm. It is found in the cytoskeleton. It localises to the microtubule organizing center. The protein localises to the centrosome. The protein resides in the centriole. Functionally, acts as a positive regulator of ciliary hedgehog signaling. Required for centriole stability. The protein is Tubulin epsilon and delta complex protein 2 of Mus musculus (Mouse).